The following is a 194-amino-acid chain: Adenylate kinase isoenzyme 1 (194 aa).

M1 bears the N-acetylmethionine mark. 18 to 23 serves as a coordination point for ATP; it reads GSGKGT. Position 38 is a phosphoserine (S38). The interval 38–67 is NMP; that stretch reads STGDLLRAEVSSGSARGKMLSEIMEKGQLV. Residues T39, R44, 65–67, 94–97, and Q101 each bind AMP; these read QLV and GYPR. Positions 131–141 are LID; sequence KRGETSGRVDD. Position 132 (R132) interacts with ATP. AMP is bound by residues R138 and R149. G177 provides a ligand contact to ATP.

Belongs to the adenylate kinase family. AK1 subfamily. In terms of assembly, monomer. It depends on Mg(2+) as a cofactor.

The protein resides in the cytoplasm. The enzyme catalyses a ribonucleoside 5'-phosphate + ATP = a ribonucleoside 5'-diphosphate + ADP. It catalyses the reaction AMP + ATP = 2 ADP. The catalysed reaction is dAMP + ATP = dADP + ADP. It carries out the reaction dATP + AMP = dADP + ADP. The enzyme catalyses dAMP + dATP = 2 dADP. It catalyses the reaction a 2'-deoxyribonucleoside 5'-diphosphate + ATP = a 2'-deoxyribonucleoside 5'-triphosphate + ADP. The catalysed reaction is a ribonucleoside 5'-diphosphate + ATP = a ribonucleoside 5'-triphosphate + ADP. It carries out the reaction CDP + GTP = CTP + GDP. The enzyme catalyses GDP + ATP = GTP + ADP. It catalyses the reaction UDP + ATP = UTP + ADP. The catalysed reaction is GTP + UDP = UTP + GDP. It carries out the reaction dTDP + GTP = dTTP + GDP. The enzyme catalyses dCDP + GTP = dCTP + GDP. It catalyses the reaction dGDP + ATP = dGTP + ADP. The catalysed reaction is dADP + GTP = dATP + GDP. It carries out the reaction thiamine diphosphate + ADP = thiamine triphosphate + AMP. In terms of biological role, catalyzes the reversible transfer of the terminal phosphate group between ATP and AMP. Also displays broad nucleoside diphosphate kinase activity. Plays an important role in cellular energy homeostasis and in adenine nucleotide metabolism. Also catalyzes at a very low rate the synthesis of thiamine triphosphate (ThTP) from thiamine diphosphate (ThDP) and ADP. In Sus scrofa (Pig), this protein is Adenylate kinase isoenzyme 1.